A 320-amino-acid chain; its full sequence is Cytochrome f (320 aa).

Positions 1 to 35 are cleaved as a signal peptide; sequence MQTRKTFSWIKEQINRSISVSLMIYIITRPSISIA. Heme is bound by residues Tyr-36, Cys-56, Cys-59, and His-60. The chain crosses the membrane as a helical span at residues 286-306; the sequence is VQGLLFFLASVILAQIFLVLK.

This sequence belongs to the cytochrome f family. The 4 large subunits of the cytochrome b6-f complex are cytochrome b6, subunit IV (17 kDa polypeptide, petD), cytochrome f and the Rieske protein, while the 4 small subunits are PetG, PetL, PetM and PetN. The complex functions as a dimer. The cofactor is heme.

The protein localises to the plastid. The protein resides in the chloroplast thylakoid membrane. In terms of biological role, component of the cytochrome b6-f complex, which mediates electron transfer between photosystem II (PSII) and photosystem I (PSI), cyclic electron flow around PSI, and state transitions. This chain is Cytochrome f, found in Daucus carota (Wild carrot).